The chain runs to 606 residues: MKVRSAGGDGDALCVTEEDLAGDDEDMPTFPCTQKGRPGPRCSRCQKNLSLHTSVRILYLFLALLLVAVAVLASLVFRKVDSLSEDISLTQSIYDKKLVLMQKNLQGLDPKALNNCSFCHEAGQLGPEIRKLQEELEGIQKLLLAQEVQLDQTLQAQEVLSTTSRQISQEMGSCSFSIHQVNQSLGLFLAQVRGWQATTAGLDLSLKDLTQECYDVKAAVHQINFTVGQTSEWIHGIQRKTDEETLTLQKIVTDWQNYTRLFSGLRTTSTKTGEAVKNIQATLGASSQRISQNSESMHDLVLQVMGLQLQLDNISSFLDDHEENMHDLQYHTHYAQNRTVERFESLEGRMASHEIEIGTIFTNINATDNHVHSMLKYLDDVRLSCTLGFHTHAEELYYLNKSVSIMLGTTDLLRERFSLLSARLDLNVRNLSMIVEEMKAVDTQHGEILRNVTILRGAPGPPGPRGFKGDMGVKGPVGGRGPKGDPGSLGPLGPQGPQGQPGEAGPVGERGPVGPRGFPGLKGSKGSFGTGGPRGQPGPKGDIGPPGPEGPPGSPGPSGPQGKPGIAGKTGSPGQRGAMGPKGEPGIQGPPGLPGPPGPPGSQSFY.

The Cytoplasmic segment spans residues 1–56; that stretch reads MKVRSAGGDGDALCVTEEDLAGDDEDMPTFPCTQKGRPGPRCSRCQKNLSLHTSVR. The chain crosses the membrane as a helical; Signal-anchor for type II membrane protein span at residues 57-77; sequence ILYLFLALLLVAVAVLASLVF. Over 78–606 the chain is Extracellular; that stretch reads RKVDSLSEDI…PGPPGSQSFY (529 aa). N115, N182, N224, N257, N313, N337, N365, N400, N430, and N451 each carry an N-linked (GlcNAc...) asparagine glycan. Residues 454 to 606 form a disordered region; that stretch reads ILRGAPGPPG…PGPPGSQSFY (153 aa). Positions 455–513 constitute a Collagen-like 1 domain; it reads LRGAPGPPGPRGFKGDMGVKGPVGGRGPKGDPGSLGPLGPQGPQGQPGEAGPVGERGPV. Low complexity predominate over residues 485–519; that stretch reads DPGSLGPLGPQGPQGQPGEAGPVGERGPVGPRGFP. A compositionally biased stretch (gly residues) spans 526-535; the sequence is GSFGTGGPRG. One can recognise a Collagen-like 2 domain in the interval 544–603; it reads GPPGPEGPPGSPGPSGPQGKPGIAGKTGSPGQRGAMGPKGEPGIQGPPGLPGPPGPPGSQ. Composition is skewed to pro residues over residues 545-558 and 591-600; these read PPGPEGPPGSPGPS and PGLPGPPGPP.

As to expression, expressed ubiquitously.

Its subcellular location is the endoplasmic reticulum membrane. It is found in the golgi apparatus membrane. Its function is as follows. Seems to protect cells by scavenging oxidative molecules or harmful products of oxidation. This chain is Scavenger receptor class A member 3 (SCARA3), found in Homo sapiens (Human).